A 324-amino-acid polypeptide reads, in one-letter code: Acetyl-coenzyme A carboxylase carboxyl transferase subunit alpha (324 aa).

In terms of domain architecture, CoA carboxyltransferase C-terminal spans 37–291 (KLEKRLDKLK…REFIIQEWLR (255 aa)).

This sequence belongs to the AccA family. In terms of assembly, acetyl-CoA carboxylase is a heterohexamer composed of biotin carboxyl carrier protein (AccB), biotin carboxylase (AccC) and two subunits each of ACCase subunit alpha (AccA) and ACCase subunit beta (AccD).

The protein localises to the cytoplasm. The enzyme catalyses N(6)-carboxybiotinyl-L-lysyl-[protein] + acetyl-CoA = N(6)-biotinyl-L-lysyl-[protein] + malonyl-CoA. It functions in the pathway lipid metabolism; malonyl-CoA biosynthesis; malonyl-CoA from acetyl-CoA: step 1/1. Functionally, component of the acetyl coenzyme A carboxylase (ACC) complex. First, biotin carboxylase catalyzes the carboxylation of biotin on its carrier protein (BCCP) and then the CO(2) group is transferred by the carboxyltransferase to acetyl-CoA to form malonyl-CoA. This is Acetyl-coenzyme A carboxylase carboxyl transferase subunit alpha from Chlamydia pneumoniae (Chlamydophila pneumoniae).